Consider the following 480-residue polypeptide: Glutathione reductase (480 aa).

Ser31 and Gly32 together coordinate FAD. Ser31 is a binding site for glutathione. Arg38 lines the glutathione pocket. Positions 51, 58, 59, and 67 each coordinate FAD. Cys59 and Cys64 are oxidised to a cystine. Position 121 (Tyr121) interacts with glutathione. Ala137 contacts FAD. NADP(+)-binding residues include Ile206, Glu209, Arg226, and Gly291. Asp331 serves as a coordination point for FAD. Residue Glu337 participates in NADP(+) binding. Position 339 (Thr339) interacts with FAD. Arg347 is a binding site for glutathione. Val372 contacts NADP(+). Residue Lys422 participates in glutathione binding. His469 contacts FAD. The active-site Proton acceptor is the His469.

Belongs to the class-I pyridine nucleotide-disulfide oxidoreductase family. Homodimer. FAD serves as cofactor.

It is found in the cytoplasm. The protein localises to the mitochondrion. It carries out the reaction 2 glutathione + NADP(+) = glutathione disulfide + NADPH + H(+). Functionally, catalyzes the reduction of glutathione disulfide (GSSG) to reduced glutathione (GSH). Constitutes the major mechanism to maintain a high GSH:GSSG ratio in the cytosol. In Eremothecium gossypii (strain ATCC 10895 / CBS 109.51 / FGSC 9923 / NRRL Y-1056) (Yeast), this protein is Glutathione reductase (GLR1).